Reading from the N-terminus, the 62-residue chain is Photosystem II reaction center protein Z (62 aa).

The next 2 helical transmembrane spans lie at leucine 8 to alanine 28 and tyrosine 41 to valine 61.

The protein belongs to the PsbZ family. As to quaternary structure, PSII is composed of 1 copy each of membrane proteins PsbA, PsbB, PsbC, PsbD, PsbE, PsbF, PsbH, PsbI, PsbJ, PsbK, PsbL, PsbM, PsbT, PsbX, PsbY, PsbZ, Psb30/Ycf12, at least 3 peripheral proteins of the oxygen-evolving complex and a large number of cofactors. It forms dimeric complexes.

It localises to the plastid. Its subcellular location is the chloroplast thylakoid membrane. May control the interaction of photosystem II (PSII) cores with the light-harvesting antenna, regulates electron flow through the 2 photosystem reaction centers. PSII is a light-driven water plastoquinone oxidoreductase, using light energy to abstract electrons from H(2)O, generating a proton gradient subsequently used for ATP formation. In Porphyra purpurea (Red seaweed), this protein is Photosystem II reaction center protein Z.